A 1372-amino-acid chain; its full sequence is DNA-directed RNA polymerase subunit beta (1372 aa).

It belongs to the RNA polymerase beta chain family. The RNAP catalytic core consists of 2 alpha, 1 beta, 1 beta' and 1 omega subunit. When a sigma factor is associated with the core the holoenzyme is formed, which can initiate transcription.

It catalyses the reaction RNA(n) + a ribonucleoside 5'-triphosphate = RNA(n+1) + diphosphate. DNA-dependent RNA polymerase catalyzes the transcription of DNA into RNA using the four ribonucleoside triphosphates as substrates. This Bradyrhizobium sp. (strain BTAi1 / ATCC BAA-1182) protein is DNA-directed RNA polymerase subunit beta.